The following is a 559-amino-acid chain: MNKLRSSAITQGVQRSPNRSMLRAVGFSDEDFTKPIIGVANGFSTITPCNMGLNKLALKAEESIREAGGMPQMFGTITVSDGISMGTEGMKYSLVSREVIADSIETACNAQSMDGVLAIGGCDKNMPGAMIAIARMNIPSIFIYGGTIKPGKLNGEDLTVVSAFEAVGQLTSGKINEKRLIEVEKNCIPGAGSCGGMFTANTMSAVIEVLGLSLPYSSTMAAEDYEKEVSAEKSAEILVDAIRKDIRPLTLMTKESFENAITVIMAIGGSTNAVLHILAIANTAGIDINIDDFERIRQKVPVICDLKPSGKYVTVDLHKAGGIPQVMKILLNTGLIHGNCRNIEGKTVVESLKDIPVKPPENQDVIRDIDNPLYKKGHLAILKGNLASEGCVAKISGIKNPVLKGPARIFESEEDCLKSILNNDIKAGNVVVIRNEGPVGGPGMREMLAPTSAIVGQGLGEKVALITDGRFSGGTYGLVVGHIAPEAAVGGNIALIKEGDLITVDATNQLIEVELSDEELEMRRINWEKPSKKYKKGVLSKYSRIVSTSSLGAVTDLEE.

Residue cysteine 49 participates in [2Fe-2S] cluster binding. Aspartate 81 is a Mg(2+) binding site. Cysteine 122 is a binding site for [2Fe-2S] cluster. Residues aspartate 123 and lysine 124 each contribute to the Mg(2+) site. The residue at position 124 (lysine 124) is an N6-carboxylysine. Residue cysteine 194 participates in [2Fe-2S] cluster binding. Residue glutamate 446 coordinates Mg(2+). Serine 472 acts as the Proton acceptor in catalysis.

The protein belongs to the IlvD/Edd family. Homodimer. The cofactor is [2Fe-2S] cluster. Mg(2+) is required as a cofactor.

It carries out the reaction (2R)-2,3-dihydroxy-3-methylbutanoate = 3-methyl-2-oxobutanoate + H2O. The catalysed reaction is (2R,3R)-2,3-dihydroxy-3-methylpentanoate = (S)-3-methyl-2-oxopentanoate + H2O. It functions in the pathway amino-acid biosynthesis; L-isoleucine biosynthesis; L-isoleucine from 2-oxobutanoate: step 3/4. It participates in amino-acid biosynthesis; L-valine biosynthesis; L-valine from pyruvate: step 3/4. Its function is as follows. Functions in the biosynthesis of branched-chain amino acids. Catalyzes the dehydration of (2R,3R)-2,3-dihydroxy-3-methylpentanoate (2,3-dihydroxy-3-methylvalerate) into 2-oxo-3-methylpentanoate (2-oxo-3-methylvalerate) and of (2R)-2,3-dihydroxy-3-methylbutanoate (2,3-dihydroxyisovalerate) into 2-oxo-3-methylbutanoate (2-oxoisovalerate), the penultimate precursor to L-isoleucine and L-valine, respectively. In Prochlorococcus marinus subsp. pastoris (strain CCMP1986 / NIES-2087 / MED4), this protein is Dihydroxy-acid dehydratase.